Consider the following 68-residue polypeptide: Large ribosomal subunit protein uL29 (68 aa).

This sequence belongs to the universal ribosomal protein uL29 family.

The sequence is that of Large ribosomal subunit protein uL29 from Albidiferax ferrireducens (strain ATCC BAA-621 / DSM 15236 / T118) (Rhodoferax ferrireducens).